The following is a 956-amino-acid chain: Glycine dehydrogenase (decarboxylating) (956 aa).

K697 carries the N6-(pyridoxal phosphate)lysine modification.

It belongs to the GcvP family. As to quaternary structure, the glycine cleavage system is composed of four proteins: P, T, L and H. Pyridoxal 5'-phosphate serves as cofactor.

The catalysed reaction is N(6)-[(R)-lipoyl]-L-lysyl-[glycine-cleavage complex H protein] + glycine + H(+) = N(6)-[(R)-S(8)-aminomethyldihydrolipoyl]-L-lysyl-[glycine-cleavage complex H protein] + CO2. Its function is as follows. The glycine cleavage system catalyzes the degradation of glycine. The P protein binds the alpha-amino group of glycine through its pyridoxal phosphate cofactor; CO(2) is released and the remaining methylamine moiety is then transferred to the lipoamide cofactor of the H protein. The polypeptide is Glycine dehydrogenase (decarboxylating) (Cereibacter sphaeroides (strain KD131 / KCTC 12085) (Rhodobacter sphaeroides)).